The primary structure comprises 1703 residues: MSSVSEVNADIRDFLMSINLEQYLLHFREFGFYTVRDCTSINDSVLHQIGISPTGHRRRILKQLQMIFSKMQDFPIYANVHKAKNGSTTKEQQHSDPSSSTHTGIECSDSITVHRPGPAPSEMVTTSTLSEGNCQSPKSHDKLCLSSHDLLCPEEELHQNVDSSKDSLFGGVNVKIDPLITKRAVEYTAGEEHTEKGNLTSEDSSKALSTNTECLPSGDCPTSGTHSGNGTNGVLESFPPTPFFQFQGEMVVNELYVPSSPVHGPMRSRSKLVSRPSRSFLLRHRPVPEIPGSTKSIPGSYFRDRRSNTTSAGKSLTLKNSNEDNSTSIFPYGETFLFQRLESSKKRSIKNEFWPHENTVKEEAATTRNSILTQSSIYDNRKEKVSEDKVEDIWIPREDKNNLAQDSASESEYSTVEECFQSLRRKNSKASKSRTQKAFYLDPFNRHSYPLSSTSGNTEPSSTISNAISPYACFYGSSAAKEKCGWLDKLSPQGKRMFQKRWVKFDGLSISHYNNDREMYSKGIIPLTAISTVRAQGDNKFEIVTTQRTFVFRVEKEEERNDWISILLSALKSPSLASQLQAAVAPEKCGYLELRGYKAKIFTVLRGNSVWLCKNEQDFKSGLGITIIPMNVANVKQVDRAVKQSFEIITPYRSFSFTADSEREKQEWIEAVQQSIAETLSDYEVAEKIWFNESNRSCADCKAPDPDWASINLCVVICKKCAGQHRSLGPKDCKVRSLKMDASIWSNELIELFIVIGNKRANDFWAGNLQKDEELQVDSPVEKRKNFITQKYKEGKFRKTLLASLTKEELNKALCAAVVKPDVLETMALLFSGADVMCATGDPVHSTPYLLAKKAGQSLQMEFLYHNKFSDFPQYDAHFEGGSSQDAAQSSFLCDFLYQTAAAASRVSSEKKLLEDTNKKWCVLEGGFLSYYENDRCTTPNGTINISEVICLAVHKEDFYLNTGPIFVFEIYLPSERVFLFGAETSQIQRKWTETIAKRFVPFVAENLTEADYDLIGQLFYKDCHALDQWRKGWFAMDKSSLCFCLQTQEAQEERMNLRRLQELTISTMVQNGEKVDVLLLVEKGRTLYIHGHTKLDFTVWHTAIEKAAGTDGNALQDQQLCKNDVPIIVNSCIAFVTQYGLGCKYIYQKDGDPLHISELLESFKKDARSVKLRAGKHQLEDVTGVLKSFLSDIDDALLTKELYPYWVSALDTQDEKERTSKYRAFIRSLPGVNRATLAALIEHLYRVQKCSEINHMNAHNLAMVFSSCLFQTKGQTSEEVNVIEDLINNYVEIFEVKEDQVKQMDIENSFITKWKDTQVSQAGDLLIEVFVERKEPDCSIIIRISPVMEAEELTNDILAIKNIIPMKGDIWATFEVIENEELERPLHYTENVLEQVLQWSSLAEPGSAYLVVKRFLTVDSIKQCREKSIKEGILKLKEEPSKILSGNKFQDRCVVLRDGHLFIYKDPKSSKHDKMFPLRAMKFYLGVKKKMKPPTSWGLTVYSEKHHWHLCCDSLQAQMEWMASIFIAQHENDIWPPAGKERKRSITKNPKIGGLPLIPIQHERNATQARKNIETARAELERLRLSEKHDPRDFTDSSLKDRASLIAHCLEHKDEKLRNRARKHRSFNCLEDTEAEGPHGLPKAYKGPKTLKKTEERNSKATLDADPKLPSKVIEELSVVLQRSRPLHKELPDEQTLQKEVK.

Residues 6–70 enclose the SAM domain; it reads EVNADIRDFL…LKQLQMIFSK (65 aa). At Y77 the chain carries Phosphotyrosine. 3 disordered regions span residues 84–132, 191–232, and 286–319; these read KNGS…LSEG, EEHT…NGTN, and PVPE…LTLK. 3 stretches are compositionally biased toward polar residues: residues 85-103, 123-132, and 197-214; these read NGST…STHT, MVTTSTLSEG, and GNLT…NTEC. The span at 222-232 shows a compositional bias: low complexity; sequence TSGTHSGNGTN. Over residues 308-319 the composition is skewed to polar residues; that stretch reads NTTSAGKSLTLK. 2 consecutive PH domains span residues 480–572 and 585–677; these read AKEK…SALK and APEK…QSIA. The Arf-GAP domain occupies 674–809; sequence QSIAETLSDY…TLLASLTKEE (136 aa). The segment at 698 to 721 adopts a C4-type zinc-finger fold; the sequence is CADCKAPDPDWASINLCVVICKKC. PH domains are found at residues 899 to 1001 and 1012 to 1110; these read QTAA…KRFV and DYDL…KAAG. The Rho-GAP domain maps to 1114 to 1295; the sequence is NALQDQQLCK…DLINNYVEIF (182 aa). The region spanning 1324-1418 is the Ras-associating domain; sequence GDLLIEVFVE…AYLVVKRFLT (95 aa). Residues 1428-1531 form the PH 5 domain; the sequence is KSIKEGILKL…WMASIFIAQH (104 aa). S1627 carries the phosphoserine modification. Disordered regions lie at residues 1633-1670 and 1684-1703; these read DTEA…DPKL and RSRP…KEVK. 2 stretches are compositionally biased toward basic and acidic residues: residues 1653-1670 and 1688-1703; these read KKTE…DPKL and LHKE…KEVK.

It localises to the cytoplasm. Phosphatidylinositol 3,4,5-trisphosphate-dependent GTPase-activating protein that modulates actin cytoskeleton remodeling by regulating ARF and RHO family members. Is activated by phosphatidylinositol 3,4,5-trisphosphate (PtdIns(3,4,5)P3) binding. Can be activated by phosphatidylinositol 3,4-bisphosphate (PtdIns(3,4,5)P2) binding, albeit with lower efficiency. This is Arf-GAP with Rho-GAP domain, ANK repeat and PH domain-containing protein 2 (Arap2) from Mus musculus (Mouse).